The following is a 238-amino-acid chain: Protein shisa-3 homolog (238 aa).

Positions 1-21 are cleaved as a signal peptide; that stretch reads MRALLALCLLLGWLRWGPAGA. The Lumenal segment spans residues 22–98; sequence QQSGEYCHGW…GITAQPVYVP (77 aa). Residues 99 to 119 traverse the membrane as a helical segment; sequence FLIVGSIFIAFIILGSVVAIY. Residues 120-238 lie on the Cytoplasmic side of the membrane; the sequence is CCTCLRPKEP…GKSCPDFSSS (119 aa). The tract at residues 151-173 is disordered; the sequence is TSTSPRAPSRQSSTATSSSSTGG. The span at 159-173 shows a compositional bias: low complexity; sequence SRQSSTATSSSSTGG.

It belongs to the shisa family.

The protein resides in the endoplasmic reticulum membrane. Plays an essential role in the maturation of presomitic mesoderm cells by individual attenuation of both FGF and WNT signaling. This Homo sapiens (Human) protein is Protein shisa-3 homolog (SHISA3).